A 239-amino-acid polypeptide reads, in one-letter code: mRNA turnover protein 4 homolog (239 aa).

The interval 216–239 (QQMGDDLPESAPESEGESEEEDDS) is disordered. The span at 221–239 (DLPESAPESEGESEEEDDS) shows a compositional bias: acidic residues. Phosphoserine occurs at positions 225, 229, and 233.

Belongs to the universal ribosomal protein uL10 family. As to quaternary structure, associates with the pre-60S ribosomal particle. Interacts with MINAS-60 (product of an alternative open reading frame of RBM10).

It is found in the nucleus. The protein resides in the nucleolus. Its subcellular location is the cytoplasm. Functionally, component of the ribosome assembly machinery. Nuclear paralog of the ribosomal protein P0, it binds pre-60S subunits at an early stage of assembly in the nucleolus, and is replaced by P0 in cytoplasmic pre-60S subunits and mature 80S ribosomes. The polypeptide is mRNA turnover protein 4 homolog (MRTO4) (Bos taurus (Bovine)).